The chain runs to 63 residues: Large ribosomal subunit protein uL30 (63 aa).

It belongs to the universal ribosomal protein uL30 family. In terms of assembly, part of the 50S ribosomal subunit.

The polypeptide is Large ribosomal subunit protein uL30 (Methylobacterium sp. (strain 4-46)).